The sequence spans 108 residues: Synaptobrevin-1 (108 aa).

Residues 1-25 (MDAQGDAGAQGGSQGPRPSNKRLQQ) form a disordered region. At 1–85 (MDAQGDAGAQ…KRKYWWKNIK (85 aa)) the chain is on the cytoplasmic side. The v-SNARE coiled-coil homology domain occupies 22–82 (RLQQTQAQVD…ATLKRKYWWK (61 aa)). Residues 86 to 106 (MMIIMCAIVVILIIIIVLWAG) traverse the membrane as a helical; Anchor for type IV membrane protein segment. The Extracellular portion of the chain corresponds to 107-108 (GK).

This sequence belongs to the synaptobrevin family. In terms of assembly, part of the SNARE core complex containing CBG09569/SNAP25, snb-1/VAMP2 and CBG03570/STX1A. This complex binds to cpx-1/CPLX1.

The protein resides in the cytoplasmic vesicle. It localises to the secretory vesicle. The protein localises to the synaptic vesicle membrane. It is found in the cell membrane. Its subcellular location is the synapse. The protein resides in the synaptosome. In terms of biological role, involved in the targeting and/or fusion of transport vesicles to their target membrane. Acts in neuronal exocytosis of synaptic transmission. Likely to have a role in cholinergic transmisson. Required for viability, coordinated movement and M3 pharynx motor neuron function. This chain is Synaptobrevin-1, found in Caenorhabditis briggsae.